The sequence spans 141 residues: Nucleoside diphosphate kinase (141 aa).

ATP is bound by residues Lys11, Phe59, Arg87, Thr93, Arg104, and Asn114. His117 serves as the catalytic Pros-phosphohistidine intermediate.

The protein belongs to the NDK family. In terms of assembly, homotetramer. It depends on Mg(2+) as a cofactor.

The protein localises to the cytoplasm. It carries out the reaction a 2'-deoxyribonucleoside 5'-diphosphate + ATP = a 2'-deoxyribonucleoside 5'-triphosphate + ADP. It catalyses the reaction a ribonucleoside 5'-diphosphate + ATP = a ribonucleoside 5'-triphosphate + ADP. Functionally, major role in the synthesis of nucleoside triphosphates other than ATP. The ATP gamma phosphate is transferred to the NDP beta phosphate via a ping-pong mechanism, using a phosphorylated active-site intermediate. The polypeptide is Nucleoside diphosphate kinase (Teredinibacter turnerae (strain ATCC 39867 / T7901)).